A 241-amino-acid chain; its full sequence is Purine nucleoside phosphorylase DeoD-type (241 aa).

H5 lines the a purine D-ribonucleoside pocket. Phosphate is bound by residues G21, R25, R44, and 88–91; that span reads RVGS. Residues 180 to 182 and 204 to 205 each bind a purine D-ribonucleoside; these read EME and SD. D205 acts as the Proton donor in catalysis.

Belongs to the PNP/UDP phosphorylase family. As to quaternary structure, homohexamer; trimer of homodimers.

It carries out the reaction a purine D-ribonucleoside + phosphate = a purine nucleobase + alpha-D-ribose 1-phosphate. It catalyses the reaction a purine 2'-deoxy-D-ribonucleoside + phosphate = a purine nucleobase + 2-deoxy-alpha-D-ribose 1-phosphate. In terms of biological role, catalyzes the reversible phosphorolytic breakdown of the N-glycosidic bond in the beta-(deoxy)ribonucleoside molecules, with the formation of the corresponding free purine bases and pentose-1-phosphate. This chain is Purine nucleoside phosphorylase DeoD-type, found in Yersinia enterocolitica serotype O:8 / biotype 1B (strain NCTC 13174 / 8081).